The primary structure comprises 91 residues: Small ribosomal subunit protein bS20 (91 aa).

Belongs to the bacterial ribosomal protein bS20 family.

In terms of biological role, binds directly to 16S ribosomal RNA. The chain is Small ribosomal subunit protein bS20 from Caulobacter sp. (strain K31).